The following is a 234-amino-acid chain: Large ribosomal subunit protein uL1 (234 aa).

Belongs to the universal ribosomal protein uL1 family. In terms of assembly, part of the 50S ribosomal subunit.

Functionally, binds directly to 23S rRNA. The L1 stalk is quite mobile in the ribosome, and is involved in E site tRNA release. In terms of biological role, protein L1 is also a translational repressor protein, it controls the translation of the L11 operon by binding to its mRNA. The sequence is that of Large ribosomal subunit protein uL1 from Escherichia coli O127:H6 (strain E2348/69 / EPEC).